Consider the following 238-residue polypeptide: Probable transcriptional regulatory protein SSP2054 (238 aa).

Belongs to the TACO1 family. YeeN subfamily.

The protein localises to the cytoplasm. This is Probable transcriptional regulatory protein SSP2054 from Staphylococcus saprophyticus subsp. saprophyticus (strain ATCC 15305 / DSM 20229 / NCIMB 8711 / NCTC 7292 / S-41).